Here is a 180-residue protein sequence, read N- to C-terminus: Adipocyte-related X-chromosome expressed sequence 1 (180 aa).

The Cytoplasmic portion of the chain corresponds to 1 to 11; it reads MNSLLSRANSL. The helical; Signal-anchor for type II membrane protein transmembrane segment at 12–32 threads the bilayer; sequence FAFTLSVMAALTLGCILTTAF. The Lumenal segment spans residues 33–180; sequence KDRSAPVRLH…PDSYEIATTF (148 aa). The N-linked (GlcNAc...) asparagine glycan is linked to N141.

This sequence belongs to the SPCS3 family. As to expression, strongly expressed in epididymal white and brown adipose tissue with low levels in heart.

It localises to the endoplasmic reticulum membrane. Plays a role in adipogenesis. The polypeptide is Adipocyte-related X-chromosome expressed sequence 1 (Mus musculus (Mouse)).